A 482-amino-acid chain; its full sequence is MKFIIKLFPEITIKSQSVRLRFIKILTGNIRNVLKHYDETLAVVRHWDNIEVRAKDENQRLTIRDALTRIPGIHHILEVEDVPFTDMHDIFEKALVQYRDQLDGKTFCVRVKRRGKHDFSSIDVERYVGGGLNQHIESARVKLTNPDVTVHLEVEDDRLLLIKGRYEGIGGFPIGTQEDVLSLISGGFDSGVSSYMLMRRGCRVHYCFFNLGGAAHEIGVRQVAHYLWNRFGSSHRVRFVAINFEPVVGEILEKIDDGQMGVILKRMMVRAASKVAERYGVQALVTGEALGQVSSQTLTNLRLIDNVSDTLILRPLISYDKEHIINLARQIGTEDFARTMPEYCGVISKSPTVKAVKSKIEAEEEKFDFSILDKVVEEANNVDIREIAQQTGQEVVEVETVNDFGPNDVILDIRSVDEQEDKPLKVEGIDVVSLPFYKLSTKFGDLDQNRTWLLWCERGVMSRLQALYLREQGFKNVKVYRP.

A THUMP domain is found at 61–165 (LTIRDALTRI…DDRLLLIKGR (105 aa)). Residues 183–184 (LI), lysine 265, glycine 287, and glutamine 296 each bind ATP. An intrachain disulfide couples cysteine 344 to cysteine 456. One can recognise a Rhodanese domain in the interval 404 to 482 (FGPNDVILDI…GFKNVKVYRP (79 aa)). Cysteine 456 acts as the Cysteine persulfide intermediate in catalysis.

This sequence belongs to the ThiI family. Interacts with IscS.

The protein resides in the cytoplasm. It carries out the reaction [ThiI sulfur-carrier protein]-S-sulfanyl-L-cysteine + a uridine in tRNA + 2 reduced [2Fe-2S]-[ferredoxin] + ATP + H(+) = [ThiI sulfur-carrier protein]-L-cysteine + a 4-thiouridine in tRNA + 2 oxidized [2Fe-2S]-[ferredoxin] + AMP + diphosphate. The enzyme catalyses [ThiS sulfur-carrier protein]-C-terminal Gly-Gly-AMP + S-sulfanyl-L-cysteinyl-[cysteine desulfurase] + AH2 = [ThiS sulfur-carrier protein]-C-terminal-Gly-aminoethanethioate + L-cysteinyl-[cysteine desulfurase] + A + AMP + 2 H(+). Its pathway is cofactor biosynthesis; thiamine diphosphate biosynthesis. Its function is as follows. Catalyzes the ATP-dependent transfer of a sulfur to tRNA to produce 4-thiouridine in position 8 of tRNAs, which functions as a near-UV photosensor. Also catalyzes the transfer of sulfur to the sulfur carrier protein ThiS, forming ThiS-thiocarboxylate. This is a step in the synthesis of thiazole, in the thiamine biosynthesis pathway. The sulfur is donated as persulfide by IscS. The protein is tRNA sulfurtransferase of Escherichia coli O157:H7.